Reading from the N-terminus, the 593-residue chain is Inactive metallocarboxypeptidase ECM14 (593 aa).

A signal peptide spans 1 to 22 (MHVTVQLSLLLSLASSLPLVSA). Residues 23–175 (IPQHDGQAYT…QAIYESYPKN (153 aa)) constitute a propeptide that is removed on maturation. 2 disordered regions span residues 75–98 (VPQR…KAPA) and 172–202 (YPKN…SQPH). Positions 78–88 (RGKDSETKTGK) are enriched in basic and acidic residues. A compositionally biased stretch (polar residues) spans 188-199 (RRFSPSASTPES). Residues 211–537 (DYQPLSVLLP…HAVVAMGKFL (327 aa)) enclose the Peptidase M14 domain. Zn(2+) is bound by residues H276 and E279. Substrate-binding positions include 276-279 (HARE), R334, and 351-352 (DR). C345 and C368 form a disulfide bridge. An N-linked (GlcNAc...) asparagine glycan is attached at N361. H408 serves as a coordination point for Zn(2+). 409-410 (SY) contacts substrate. Residues 548-593 (DEPHAGEQTQDNSYDEDGDNLFRAQGGDPQVRFTRRNIGAHDDDSE) are disordered.

This sequence belongs to the peptidase M14 family. Zn(2+) serves as cofactor.

Its subcellular location is the vacuole. The protein resides in the secreted. Inactive carboxypeptidase that may play a role in cell wall organization and biogenesis. This chain is Inactive metallocarboxypeptidase ECM14 (ECM14), found in Arthroderma otae (strain ATCC MYA-4605 / CBS 113480) (Microsporum canis).